Reading from the N-terminus, the 337-residue chain is Heme A synthase (337 aa).

The next 5 membrane-spanning stretches (helical) occupy residues Ile6–Ile26, Phe87–Phe107, Leu119–Val139, Leu154–Lys174, and Leu192–Val212. A heme-binding site is contributed by His256. The next 3 helical transmembrane spans lie at Leu258 to Glu278, Ile285 to Leu305, and Val308 to Ile328. His316 serves as a coordination point for heme.

This sequence belongs to the COX15/CtaA family. Type 2 subfamily. Interacts with CtaB. Requires heme b as cofactor.

The protein resides in the cell membrane. The enzyme catalyses Fe(II)-heme o + 2 A + H2O = Fe(II)-heme a + 2 AH2. It participates in porphyrin-containing compound metabolism; heme A biosynthesis; heme A from heme O: step 1/1. Functionally, catalyzes the conversion of heme O to heme A by two successive hydroxylations of the methyl group at C8. The first hydroxylation forms heme I, the second hydroxylation results in an unstable dihydroxymethyl group, which spontaneously dehydrates, resulting in the formyl group of heme A. The polypeptide is Heme A synthase (Rickettsia africae (strain ESF-5)).